We begin with the raw amino-acid sequence, 216 residues long: uncharacterized protein (216 aa).

Residues 7–29 (ILVIFFLIFFIGFEFSDMTLAFI) form a helical membrane-spanning segment.

The protein resides in the membrane. This is an uncharacterized protein from Archaeoglobus fulgidus (strain ATCC 49558 / DSM 4304 / JCM 9628 / NBRC 100126 / VC-16).